The primary structure comprises 1984 residues: Spermatogenesis-associated protein 31H1 (1984 aa).

Disordered regions lie at residues 448–467 (MGLT…TPGP), 1045–1067 (PMEE…QHSL), 1181–1287 (YRER…SDSK), 1326–1346 (RIGA…KPSQ), and 1439–1984 (QQPR…EATR). 3 stretches are compositionally biased toward polar residues: residues 450–463 (LTKS…SPGT), 1058–1067 (TRISESQHSL), and 1205–1226 (TQAS…QSPA). A compositionally biased stretch (basic and acidic residues) spans 1238–1247 (SRPDLVEKTK). Polar residues-rich tracts occupy residues 1458–1471 (TDSQ…TASV) and 1492–1508 (RNET…TPGT). Basic and acidic residues-rich tracts occupy residues 1532 to 1558 (DKLT…ERTR) and 1568 to 1579 (SPSERSQRSSLE). 3 tandem repeats follow at residues 1593–1600 (PSRKNHSS), 1601–1608 (PSERSWRS), and 1609–1616 (PSQRNHCS). Residues 1593–1935 (PSRKNHSSPS…CSPSERSRRS (343 aa)) form a 27 X 8 AA approximate tandem repeat of P-S-E-R-S-H-H-S region. Low complexity predominate over residues 1599-1610 (SSPSERSWRSPS). A compositionally biased stretch (basic and acidic residues) spans 1620–1630 (RSCHSLSERGL). A compositionally biased stretch (basic residues) spans 1636–1647 (RSHRGPSQRRHH). Repeat copies occupy residues 1641–1648 (PSQRRHHS), 1649–1656 (PSERSHRS), and 1657–1664 (PSERSHRS). Over residues 1648-1667 (SPSERSHRSPSERSHRSSSE) the composition is skewed to basic and acidic residues. Basic residues predominate over residues 1668-1679 (RRHRSPSQRSHR). Over residues 1680 to 1691 (GPSERSHCSPSE) the composition is skewed to basic and acidic residues. Repeat copies occupy residues 1681 to 1688 (PSERSHCS), 1689 to 1696 (PSERRHRS), 1697 to 1704 (PSQRSHRG), 1705 to 1712 (PSERRHHS), 1713 to 1720 (PSKRSHRS), 1721 to 1728 (PARRSHRS), 1729 to 1736 (PSERSHHS), 1737 to 1744 (PSERSHHS), 1745 to 1752 (PSERRHHS), 1753 to 1760 (PSERSHCS), 1761 to 1768 (PSERSHCS), 1769 to 1776 (PSERRHRS), 1777 to 1784 (PSERRHHS), 1785 to 1792 (PSEKSHHS), 1793 to 1800 (PSERSHHS), 1801 to 1808 (PSERRRHS), 1848 to 1855 (PSEKSHLS), 1864 to 1871 (PSERRGHS), and 1880 to 1887 (PSERSHRS). A compositionally biased stretch (basic residues) spans 1692–1727 (RRHRSPSQRSHRGPSERRHHSPSKRSHRSPARRSHR). A compositionally biased stretch (basic and acidic residues) spans 1728–1869 (SPSERSHHSP…SRCSPSERRG (142 aa)). 3 stretches are compositionally biased toward basic and acidic residues: residues 1895–1917 (RTSE…EMRP), 1928–1941 (PSER…KEGL), and 1949–1959 (RPSHSLSRDFK). 2 consecutive repeat copies span residues 1921-1928 (SGRNHCSP) and 1929-1935 (SERSRRS). A compositionally biased stretch (polar residues) spans 1960 to 1969 (NQTTLLGTTH).

In terms of tissue distribution, expressed in sperm (at protein level).

In Homo sapiens (Human), this protein is Spermatogenesis-associated protein 31H1.